A 617-amino-acid chain; its full sequence is uncharacterized protein (617 aa).

Low complexity-rich tracts occupy residues 1 to 16 (MSKC…SNSS) and 36 to 45 (STTSSNGSNS). Positions 1–49 (MSKCATPTPSTSSNSSDEAKRSPQPMSRGFPQRNMSTTSSNGSNSPRHR) are disordered. 3 helical membrane-spanning segments follow: residues 219-239 (LMIG…GGLA), 262-282 (TAGA…FTGY), and 427-447 (PITL…LLTM).

The protein belongs to the TMCO4 family.

It localises to the membrane. This is an uncharacterized protein from Caenorhabditis elegans.